We begin with the raw amino-acid sequence, 99 residues long: Nucleoid-associated protein EbfC (99 aa).

It belongs to the YbaB/EbfC family. Homodimer. Can form tetramers and octamers in solution.

It is found in the cytoplasm. Its subcellular location is the nucleoid. Its function is as follows. Binds to DNA and alters its conformation. May be involved in global regulation of gene expression. Binds specifically and non-specifically to DNA, preferentially to the 4 bp broken palindrome 5'-GTnAC-3'. Affects expression of a wide variety of genes, encoding both structural and metabolic proteins. The sequence is that of Nucleoid-associated protein EbfC from Borreliella burgdorferi (strain ATCC 35210 / DSM 4680 / CIP 102532 / B31) (Borrelia burgdorferi).